Here is a 141-residue protein sequence, read N- to C-terminus: ATP synthase epsilon chain (141 aa).

This sequence belongs to the ATPase epsilon chain family. F-type ATPases have 2 components, CF(1) - the catalytic core - and CF(0) - the membrane proton channel. CF(1) has five subunits: alpha(3), beta(3), gamma(1), delta(1), epsilon(1). CF(0) has three main subunits: a, b and c.

It is found in the cell inner membrane. Produces ATP from ADP in the presence of a proton gradient across the membrane. In Burkholderia multivorans (strain ATCC 17616 / 249), this protein is ATP synthase epsilon chain.